An 859-amino-acid chain; its full sequence is MNAIDTQNLEKHTPMMRQYLTLKAEHPEMLLFYRMGDFYELFYDDAKKASELLGISLTARGKSGGDPIPMAGLPYHAVEGYLAKLVQLRVSVAICEQVGDPATSKGPVERKVVRLVTPGTLTDEALLQEKQDNLLAAVYHGKSGYGYATLDISSGRFVVAELASTEALEAELQRTNPAELLYSEDFSEMGLISGFNGKRRRPEWEFDFDTSQKLLLDQFGTKDLRGFGLDNARLSLQAAGCLMQYVKDTQRTALPHINSIVRFNQSDSIVLDAATRRNLELTVNLQGGHENTLASVLDNTATPMGSRMLQRWIHEPLRNQQQIESRQSALTEILDTNLFETLEPQLKALGDVERITARLALRSARPRDFARLKQAISLLPEIQQSLANCQSAHLHHLARMLGEFPDELELLERAIVDNPPMLIRDGGVLKEGYNAELDQWRALSQGATDYLSELEAREKEQTGISTLKVGYNRVHGYYIEVSRRESDLVPLSYQRRQTLKNTERYIIAELKEHEEKVLSSQGKALALEKQLWEQLFDQILPKLHDLQLFAQGAAELDVINNFAERAETLNYSCPTLSQKSGIHIEGGRHPVVEQVSQTPFIANPVTLNPARKMLIVTGPNMGGKSTYMRQVALITLMTHIGCYVPAQSAVIGPVDRIFTRIGAADDLASGRSTFMVEMTETANILHNATTESLVLMDEIGRGTSTYDGLSLAWSAAEYLAQKIEAMTLFATHYFELTQLPELISNVENVHLDAIEHGDTIVFMHAVQEGAASKSYGLQVAALAGVPGKVITAAKHKLHHLESRDTNSAVDSMTTSNQQSMVFDEPVNSALNDALDKIHPDELSPRQALDILYELKRLTS.

Residue 618–625 (GPNMGGKS) coordinates ATP.

It belongs to the DNA mismatch repair MutS family.

Functionally, this protein is involved in the repair of mismatches in DNA. It is possible that it carries out the mismatch recognition step. This protein has a weak ATPase activity. The sequence is that of DNA mismatch repair protein MutS from Shewanella sediminis (strain HAW-EB3).